The primary structure comprises 701 residues: Polyribonucleotide nucleotidyltransferase (701 aa).

Residues Asp-485 and Asp-491 each contribute to the Mg(2+) site. Residues 552–611 (PKIFKTTVDPEKIRDIIGPGGKMINKIIAETNVKIDIEPDGRIFVAAPDDISGNRAISMI) form the KH domain. The S1 motif domain maps to 621–689 (GQFFLGKVTR…KLGRLSLSRK (69 aa)).

It belongs to the polyribonucleotide nucleotidyltransferase family. It depends on Mg(2+) as a cofactor.

The protein resides in the cytoplasm. The catalysed reaction is RNA(n+1) + phosphate = RNA(n) + a ribonucleoside 5'-diphosphate. Its function is as follows. Involved in mRNA degradation. Catalyzes the phosphorolysis of single-stranded polyribonucleotides processively in the 3'- to 5'-direction. The polypeptide is Polyribonucleotide nucleotidyltransferase (Caldicellulosiruptor bescii (strain ATCC BAA-1888 / DSM 6725 / KCTC 15123 / Z-1320) (Anaerocellum thermophilum)).